The primary structure comprises 61 residues: Large ribosomal subunit protein uL30 (61 aa).

Belongs to the universal ribosomal protein uL30 family. As to quaternary structure, part of the 50S ribosomal subunit.

The chain is Large ribosomal subunit protein uL30 from Shewanella halifaxensis (strain HAW-EB4).